Consider the following 549-residue polypeptide: Chaperonin GroEL 1 (549 aa).

ATP contacts are provided by residues 30 to 33, Lys-51, 87 to 91, Gly-415, 479 to 481, and Asp-495; these read TLGP, DGTTT, and NAA.

Belongs to the chaperonin (HSP60) family. In terms of assembly, forms a cylinder of 14 subunits composed of two heptameric rings stacked back-to-back. Interacts with the co-chaperonin GroES.

It is found in the cytoplasm. The enzyme catalyses ATP + H2O + a folded polypeptide = ADP + phosphate + an unfolded polypeptide.. Its function is as follows. Together with its co-chaperonin GroES, plays an essential role in assisting protein folding. The GroEL-GroES system forms a nano-cage that allows encapsulation of the non-native substrate proteins and provides a physical environment optimized to promote and accelerate protein folding. The sequence is that of Chaperonin GroEL 1 from Azoarcus sp. (strain BH72).